We begin with the raw amino-acid sequence, 296 residues long: UBX domain-containing protein 1-A (296 aa).

A UBA domain is found at 1-42 (MAECSTLESLIEMGFSSTRAEKALTATGNQGIEPAMDWLVEH). The segment at 43–216 (EDDPDIDEPS…VQEPPTKKEY (174 aa)) is disordered. A compositionally biased stretch (low complexity) spans 61–75 (TDTADTTDTTDTTDT). Basic and acidic residues-rich tracts occupy residues 86 to 100 (PLTE…KRMM), 107 to 123 (QNER…EQEK), and 138 to 178 (KMQE…DRAR). Residues 87-177 (LTEEEKEKQT…KIARDKADRA (91 aa)) adopt a coiled-coil conformation. Residues 191–206 (PAETSIPATTPSPSSP) are compositionally biased toward low complexity. Residues 214 to 293 (KEYDQCRIQV…GLVPTAVLIV (80 aa)) enclose the UBX domain.

It is found in the cytoplasm. Functionally, component of a complex required to couple deglycosylation and proteasome-mediated degradation of misfolded proteins in the endoplasmic reticulum that are retrotranslocated in the cytosol. Involved in ubiquitin-proteasome systems. The polypeptide is UBX domain-containing protein 1-A (ubxn1-a) (Xenopus laevis (African clawed frog)).